The chain runs to 275 residues: Putative ribonuclease-like protein YfkH (275 aa).

A run of 6 helical transmembrane segments spans residues 23–43 (LAYF…TLTA), 83–103 (LLSF…NAIV), 126–146 (IFLT…PVFG), 172–192 (WGVS…IAPN), 199–219 (FVMP…TLFS), and 235–255 (IGGI…IILG).

The protein resides in the cell membrane. This is Putative ribonuclease-like protein YfkH (yfkH) from Bacillus subtilis (strain 168).